Consider the following 561-residue polypeptide: MDSVNDSLVILDIKYWTNHNNKKIFDKNLMKFLKKDYFRKIPSTKHKDLPAIPFPNYHVCSNVKCSRLFDLRDNFVMSDYLKGGPKCPDCSRKSYPARFVVSCQENHLDDFPWRWWAHGKQDTECKGKLRLWSTGNTSSLDSLYVECECKKKKSLRGAMQDSSFENYKCTGNHPHKLNEKSNCNEPVIPLQRGASNVYFPALRSAIVIPSNASEDNNLDDFFTSVKEVINTYADLIGENWHYKFYSDRLTGHSEFSDAEDFIAKWTSYLNSNDSEEEIEYNQIKEAEYRAFTAFDRKVKMGDFEAEVETVPDDFQPYFNRIVKAHRLKEILVLLGFMRNDSPEPDVNEPKKIVWLESDGYENWLPAIEVHGEGIFIEFNHTTISKWLEENSELPKRSEKFSSLYASWIESKGWEVRDEKDIVYVMLHTFAHLLIKQLSLQSGYSSVAIKERIYCGKNMAGVLLYTGSTDQEGSLGGLVEMGSIDKLRPLIVDALEEAIFCSNDPSCASLEPSEDNQLNGCACFACSMVAETSCETGNRLLDRSLLVKTIDSKYSPFFKGLL.

The protein resides in the cytoplasm. Its function is as follows. Component of antiviral defense system DISARM (defense island system associated with restriction-modification), composed of DrmE, DrmA, DrmB, DrmC and DrmMII. DISARM is probably a multi-gene restriction module, this subunit has an unknown function. Expression of DISARM in B.subtilis (strain BEST7003) confers resistance to phages Nf, phi29, phi105, phi3T, SPO1, SPR and SPP1. Protection is over 10(7)-fold against phi3T, 10(4)-10(5)-fold against Nf, phi29, phi105 and SPR, 100-fold against SPO1 and 10-fold against SPP1. DISARM does not interfere with phage adsorption, but instead interferes with (phi3T) DNA replication early in its cycle, preventing replication, circularization and lysogeny and probably causes phage DNA degradation (DNA is degraded in SPP1-infected cells). This Bacillus paralicheniformis (strain ATCC 9945a / NCIMB 11709 / CD-2) protein is DISARM protein DrmB.